Reading from the N-terminus, the 60-residue chain is Large ribosomal subunit protein bL32 (60 aa).

The interval 1–60 is disordered; the sequence is MAVQQVKKSRSKRDMRRSHDSLTGPTLSTDKSTGELHLRHHVSPNGFYKGKKVVDTKSED. Residues 7 to 16 are compositionally biased toward basic residues; sequence KKSRSKRDMR.

This sequence belongs to the bacterial ribosomal protein bL32 family.

The polypeptide is Large ribosomal subunit protein bL32 (Francisella philomiragia subsp. philomiragia (strain ATCC 25017 / CCUG 19701 / FSC 153 / O#319-036)).